An 889-amino-acid polypeptide reads, in one-letter code: DNA gyrase subunit A (889 aa).

In terms of domain architecture, Topo IIA-type catalytic spans 35-501; sequence LPDVRDGLKP…GFEDLEDEDL (467 aa). Catalysis depends on Y123, which acts as the O-(5'-phospho-DNA)-tyrosine intermediate. The GyrA-box signature appears at 528-534; the sequence is QNRGGRG. Residues 811–889 form a disordered region; it reads KEDAEDETNE…IQQSLDEDEE (79 aa). Residues 813–823 are compositionally biased toward acidic residues; sequence DAEDETNEDEQ. Basic and acidic residues predominate over residues 863–875; the sequence is DGRIEVRQDFMDR. The span at 876-889 shows a compositional bias: acidic residues; it reads VEEDIQQSLDEDEE.

It belongs to the type II topoisomerase GyrA/ParC subunit family. In terms of assembly, heterotetramer, composed of two GyrA and two GyrB chains. In the heterotetramer, GyrA contains the active site tyrosine that forms a transient covalent intermediate with DNA, while GyrB binds cofactors and catalyzes ATP hydrolysis.

The protein localises to the cytoplasm. The enzyme catalyses ATP-dependent breakage, passage and rejoining of double-stranded DNA.. In terms of biological role, a type II topoisomerase that negatively supercoils closed circular double-stranded (ds) DNA in an ATP-dependent manner to modulate DNA topology and maintain chromosomes in an underwound state. Negative supercoiling favors strand separation, and DNA replication, transcription, recombination and repair, all of which involve strand separation. Also able to catalyze the interconversion of other topological isomers of dsDNA rings, including catenanes and knotted rings. Type II topoisomerases break and join 2 DNA strands simultaneously in an ATP-dependent manner. The polypeptide is DNA gyrase subunit A (Staphylococcus aureus).